We begin with the raw amino-acid sequence, 417 residues long: UDP-N-acetylglucosamine 1-carboxyvinyltransferase (417 aa).

22-23 contributes to the phosphoenolpyruvate binding site; it reads KN. Arg-94 is a binding site for UDP-N-acetyl-alpha-D-glucosamine. Residue Cys-118 is the Proton donor of the active site. The residue at position 118 (Cys-118) is a 2-(S-cysteinyl)pyruvic acid O-phosphothioketal. UDP-N-acetyl-alpha-D-glucosamine contacts are provided by residues 123-127, Asp-306, and Ile-328; that span reads RPIDQ.

This sequence belongs to the EPSP synthase family. MurA subfamily.

Its subcellular location is the cytoplasm. The enzyme catalyses phosphoenolpyruvate + UDP-N-acetyl-alpha-D-glucosamine = UDP-N-acetyl-3-O-(1-carboxyvinyl)-alpha-D-glucosamine + phosphate. The protein operates within cell wall biogenesis; peptidoglycan biosynthesis. Cell wall formation. Adds enolpyruvyl to UDP-N-acetylglucosamine. This Clostridium botulinum (strain ATCC 19397 / Type A) protein is UDP-N-acetylglucosamine 1-carboxyvinyltransferase.